Consider the following 312-residue polypeptide: Acetyl-coenzyme A carboxylase carboxyl transferase subunit alpha (312 aa).

Positions 36–286 (ELEKEIEKTF…KTYFLESVKA (251 aa)) constitute a CoA carboxyltransferase C-terminal domain.

Belongs to the AccA family. In terms of assembly, acetyl-CoA carboxylase is a heterohexamer composed of biotin carboxyl carrier protein (AccB), biotin carboxylase (AccC) and two subunits each of ACCase subunit alpha (AccA) and ACCase subunit beta (AccD).

Its subcellular location is the cytoplasm. The enzyme catalyses N(6)-carboxybiotinyl-L-lysyl-[protein] + acetyl-CoA = N(6)-biotinyl-L-lysyl-[protein] + malonyl-CoA. The protein operates within lipid metabolism; malonyl-CoA biosynthesis; malonyl-CoA from acetyl-CoA: step 1/1. Its function is as follows. Component of the acetyl coenzyme A carboxylase (ACC) complex. First, biotin carboxylase catalyzes the carboxylation of biotin on its carrier protein (BCCP) and then the CO(2) group is transferred by the carboxyltransferase to acetyl-CoA to form malonyl-CoA. In Sulfurovum sp. (strain NBC37-1), this protein is Acetyl-coenzyme A carboxylase carboxyl transferase subunit alpha.